The following is a 42-amino-acid chain: Tachystatin-B2 (42 aa).

Cystine bridges form between cysteine 4–cysteine 20, cysteine 11–cysteine 25, and cysteine 19–cysteine 37.

Granular hemocytes, small secretory granules.

The protein resides in the secreted. In terms of biological role, exhibits stronger antimicrobial activity against the Gram-positive bacteria (S.aureus (IC(50) is 7.4 ug/ml)) and fungi (C.albicans (IC(50) is 3.0 ug/ml) and P.pastoris (IC(50) is 0.1 ug/ml)) than Gram-negative bacteria (E.coli no inhibition at 100 ug/ml). Binds to chitin (4.3 uM are required to obtain 50% of binding). Does not cause hemolysis on sheep erythrocytes. Has no blocking activity on the P-type calcium channel. This Tachypleus tridentatus (Japanese horseshoe crab) protein is Tachystatin-B2.